We begin with the raw amino-acid sequence, 275 residues long: Large ribosomal subunit protein uL2c (275 aa).

A disordered region spans residues 225–256 (AMNAVDHPHGGGEGRSPIGRSQPSTPWGRPAL).

It belongs to the universal ribosomal protein uL2 family. As to quaternary structure, part of the 50S ribosomal subunit.

The protein resides in the plastid. It is found in the chloroplast. This chain is Large ribosomal subunit protein uL2c (rpl2), found in Cyanidium caldarium (Red alga).